A 34-amino-acid chain; its full sequence is Cytochrome b6-f complex subunit 8 (34 aa).

A helical membrane pass occupies residues 3-23 (LLTFGWAALLAVFTFSLAMVV).

Belongs to the PetN family. The 4 large subunits of the cytochrome b6-f complex are cytochrome b6, subunit IV (17 kDa polypeptide, PetD), cytochrome f and the Rieske protein, while the 4 small subunits are PetG, PetL, PetM and PetN. The complex functions as a dimer.

Its subcellular location is the cellular thylakoid membrane. Functionally, component of the cytochrome b6-f complex, which mediates electron transfer between photosystem II (PSII) and photosystem I (PSI), cyclic electron flow around PSI, and state transitions. The polypeptide is Cytochrome b6-f complex subunit 8 (Synechococcus elongatus (strain ATCC 33912 / PCC 7942 / FACHB-805) (Anacystis nidulans R2)).